A 290-amino-acid polypeptide reads, in one-letter code: Protein ORF27 (290 aa).

This Human herpesvirus 8 type P (isolate GK18) (HHV-8) protein is Protein ORF27 (ORF27).